A 1634-amino-acid polypeptide reads, in one-letter code: Leucine-rich repeat-containing protein 37A3 (1634 aa).

Residues 1–35 form the signal peptide; the sequence is MTSAQCPALACVMSPLRFWGPWPLLMWQLLWLLVK. Residues 36-1581 are Extracellular-facing; it reads EAQPLEWVKD…ELPGYGYTKK (1546 aa). Disordered regions lie at residues 53–104, 129–154, 172–531, 619–642, and 758–777; these read PLGP…ESTE, SQQD…KKDP, TPQS…VVVA, PEPT…KHPE, and EPTT…APRP. Residues 137–160 form an LRR 1 repeat; the sequence is LSPQERLPVSPKKLKKDPAQRWSL. Polar residues-rich tracts occupy residues 172–189 and 223–237; these read TPQS…STDT and ETQN…QSSS. LRR repeat units lie at residues 230–253 and 267–290; these read LEDI…LEEE and ESSM…EDQA. Over residues 238–249 the composition is skewed to low complexity; it reads LQQEAPAQLPQL. An N-linked (GlcNAc...) asparagine glycan is attached at N296. Residues 307–326 show a composition bias toward polar residues; it reads TITSEPTNETESSQAQQETP. The span at 358-368 shows a compositional bias: low complexity; sequence SEQQQPVQPSE. The span at 433–446 shows a compositional bias: polar residues; sequence LVHQEATTRLSGSG. Residues 482-493 are compositionally biased toward low complexity; the sequence is SPEPINNENPSP. Over residues 760–770 the composition is skewed to polar residues; the sequence is TTETGHSTALE. LRR repeat units follow at residues 864–887, 888–911, 912–935, 937–959, 963–987, and 1002–1027; these read NGTF…VWKA, YSWT…SFEG, LLSL…TFEP, PFLK…TFQA, MQFL…LFKL, and LTTL…MACC. The N-linked (GlcNAc...) asparagine glycan is linked to N1079. 2 LRR repeats span residues 1124–1146 and 1151–1176; these read LPYF…KLPT and LAKI…SIQK. Basic and acidic residues-rich tracts occupy residues 1181–1191 and 1201–1216; these read EVGRQSIRREQ and AEEK…ELKQ. 2 disordered regions span residues 1181-1227 and 1306-1329; these read EVGR…EKLA and RFHK…KVRK. The LRR 12 repeat unit spans residues 1359–1384; that stretch reads FSSLRDLSPQENPFLEVSAPSEHFIE. A helical membrane pass occupies residues 1582-1602; that stretch reads LILALIVTGILTILIILLCLI. Topologically, residues 1603–1634 are cytoplasmic; that stretch reads EICCHRRSLQEDEEGFSRDSEAPTEEESEALP. The interval 1614 to 1634 is disordered; sequence DEEGFSRDSEAPTEEESEALP. A compositionally biased stretch (acidic residues) spans 1624-1634; that stretch reads APTEEESEALP.

Belongs to the LRRC37A family.

Its subcellular location is the membrane. The protein is Leucine-rich repeat-containing protein 37A3 (LRRC37A3) of Homo sapiens (Human).